The sequence spans 320 residues: Biotin synthase (320 aa).

One can recognise a Radical SAM core domain in the interval 43–270 (GAVQKSQLLS…KSWVRLSAGR (228 aa)). 3 residues coordinate [4Fe-4S] cluster: Cys58, Cys62, and Cys65. The [2Fe-2S] cluster site is built by Cys102, Cys133, Cys193, and Arg265.

Belongs to the radical SAM superfamily. Biotin synthase family. As to quaternary structure, homodimer. [4Fe-4S] cluster serves as cofactor. [2Fe-2S] cluster is required as a cofactor.

The catalysed reaction is (4R,5S)-dethiobiotin + (sulfur carrier)-SH + 2 reduced [2Fe-2S]-[ferredoxin] + 2 S-adenosyl-L-methionine = (sulfur carrier)-H + biotin + 2 5'-deoxyadenosine + 2 L-methionine + 2 oxidized [2Fe-2S]-[ferredoxin]. It functions in the pathway cofactor biosynthesis; biotin biosynthesis; biotin from 7,8-diaminononanoate: step 2/2. Functionally, catalyzes the conversion of dethiobiotin (DTB) to biotin by the insertion of a sulfur atom into dethiobiotin via a radical-based mechanism. The sequence is that of Biotin synthase from Hyphomonas neptunium (strain ATCC 15444).